A 59-amino-acid chain; its full sequence is Prokaryotic ubiquitin-like protein UBact (59 aa).

Positions 1–59 (MEMTDPLRREEKKESSPDPKEESGPSRPDVSRPGRDSLLKRMKKVDPKQSEKYKQRTGQ) are disordered. Q59 bears the Deamidated glutamine mark. Q59 participates in a covalent cross-link: Isoglutamyl lysine isopeptide (Gln-Lys) (interchain with K-? in acceptor proteins).

This sequence belongs to the ubiquitin-like protein UBact family. Post-translationally, may be modified by deamidation of its C-terminal glutamine to glutamate by the adjacently encoded deamidase. This could be a prerequisite to the subsequent conjugation, as shown in the other prokaryotic ubiquitin-like protein Pup.

May function as a protein modifier covalently attached to lysine residues of substrate proteins. This may serve to target the modified proteins for degradation by proteasomes. This chain is Prokaryotic ubiquitin-like protein UBact, found in Nitrospina gracilis (strain 3/211).